The following is a 376-amino-acid chain: Riboflavin biosynthesis protein RibD (376 aa).

The segment at M1 to K157 is deaminase. In terms of domain architecture, CMP/dCMP-type deaminase spans M13 to V135. Position 62 (H62) interacts with Zn(2+). E64 serves as the catalytic Proton donor. Zn(2+) contacts are provided by C87 and C96. The interval R158 to L376 is reductase. A166 is a binding site for NADP(+). S180 lines the substrate pocket. An NADP(+)-binding site is contributed by W182. Substrate is bound at residue R196. The NADP(+) site is built by T208 and D212. 2 residues coordinate substrate: L216 and R219. S233 is a binding site for NADP(+). E304 is a substrate binding site. Position 306 to 312 (G306 to S312) interacts with NADP(+).

This sequence in the N-terminal section; belongs to the cytidine and deoxycytidylate deaminase family. In the C-terminal section; belongs to the HTP reductase family. Zn(2+) is required as a cofactor.

It catalyses the reaction 2,5-diamino-6-hydroxy-4-(5-phosphoribosylamino)-pyrimidine + H2O + H(+) = 5-amino-6-(5-phospho-D-ribosylamino)uracil + NH4(+). It carries out the reaction 5-amino-6-(5-phospho-D-ribitylamino)uracil + NADP(+) = 5-amino-6-(5-phospho-D-ribosylamino)uracil + NADPH + H(+). It functions in the pathway cofactor biosynthesis; riboflavin biosynthesis; 5-amino-6-(D-ribitylamino)uracil from GTP: step 2/4. It participates in cofactor biosynthesis; riboflavin biosynthesis; 5-amino-6-(D-ribitylamino)uracil from GTP: step 3/4. Converts 2,5-diamino-6-(ribosylamino)-4(3h)-pyrimidinone 5'-phosphate into 5-amino-6-(ribosylamino)-2,4(1h,3h)-pyrimidinedione 5'-phosphate. The sequence is that of Riboflavin biosynthesis protein RibD (ribD) from Actinobacillus pleuropneumoniae (Haemophilus pleuropneumoniae).